An 83-amino-acid chain; its full sequence is ATP synthase subunit c (83 aa).

Helical transmembrane passes span 10-30 (IAVA…FGLL) and 52-72 (MFIV…IALY).

Belongs to the ATPase C chain family. F-type ATPases have 2 components, F(1) - the catalytic core - and F(0) - the membrane proton channel. F(1) has five subunits: alpha(3), beta(3), gamma(1), delta(1), epsilon(1). F(0) has three main subunits: a(1), b(2) and c(10-14). The alpha and beta chains form an alternating ring which encloses part of the gamma chain. F(1) is attached to F(0) by a central stalk formed by the gamma and epsilon chains, while a peripheral stalk is formed by the delta and b chains.

Its subcellular location is the cell inner membrane. In terms of biological role, f(1)F(0) ATP synthase produces ATP from ADP in the presence of a proton or sodium gradient. F-type ATPases consist of two structural domains, F(1) containing the extramembraneous catalytic core and F(0) containing the membrane proton channel, linked together by a central stalk and a peripheral stalk. During catalysis, ATP synthesis in the catalytic domain of F(1) is coupled via a rotary mechanism of the central stalk subunits to proton translocation. Key component of the F(0) channel; it plays a direct role in translocation across the membrane. A homomeric c-ring of between 10-14 subunits forms the central stalk rotor element with the F(1) delta and epsilon subunits. The sequence is that of ATP synthase subunit c from Shewanella amazonensis (strain ATCC BAA-1098 / SB2B).